The sequence spans 834 residues: Prominin-2 (834 aa).

The first 26 residues, 1–26 (MKHTLALLAPLLGLGLGLALSQLAAG), serve as a signal peptide directing secretion. Over 27–106 (ATDCKFLGPA…NEVVRYEAGY (80 aa)) the chain is Extracellular. Residues 107–127 (VVCAVIAGLYLLLVPTAGLCF) form a helical membrane-spanning segment. Residues 128-153 (CCCRCHRRCGGRVKTEHKALACERAA) lie on the Cytoplasmic side of the membrane. A helical membrane pass occupies residues 154–174 (LMVFLLLTTLLLLIGVVCAFV). Topologically, residues 175–426 (TNQRTHEQMG…EVQRYETYRW (252 aa)) are extracellular. N270 is a glycosylation site (N-linked (GlcNAc...) asparagine). A helical transmembrane segment spans residues 427-447 (IVGCVLCSVVLFVVLCNLLGL). The Cytoplasmic portion of the chain corresponds to 448-472 (NLGIWGLSARDDPSHPEAKGEAGAR). The chain crosses the membrane as a helical span at residues 473–493 (FLMAGVGLSFLFAAPLILLVF). The Extracellular segment spans residues 494 to 779 (ATFLVGGNVQ…LCDMMADPWN (286 aa)). S727 is subject to Phosphoserine. The chain crosses the membrane as a helical span at residues 780–800 (AFWFCLAWCTFFLIPSIIFAV). Residues 801–834 (KTSKYFRPIRKRLSSTSSEETQLFHIPRVTSLKL) are Cytoplasmic-facing. S818 is subject to Phosphoserine.

This sequence belongs to the prominin family. As to quaternary structure, binds cholesterol. In terms of processing, glycosylated. Present in saliva within small membrane particles (at protein level). Expressed in kidney, prostate, trachea, esophagus, salivary gland, thyroid gland, mammary gland adrenal gland, placenta, stomach, spinal cord and liver. In submucosal tumor, expressed in spindle-shaped or stellate stromal cells. Expressed in prostate cancer cell lines.

The protein resides in the apical cell membrane. The protein localises to the basolateral cell membrane. It localises to the cell projection. It is found in the microvillus membrane. Its subcellular location is the cilium membrane. This chain is Prominin-2 (PROM2), found in Homo sapiens (Human).